The following is a 452-amino-acid chain: Protein MLF3 (452 aa).

Phosphoserine is present on residues Ser-8, Ser-11, Ser-14, Ser-56, Ser-74, and Ser-79. The segment at 61–94 is disordered; sequence SGSEVRTPSLRKNSNNVSSPLDNVIPTSRSASNS. The span at 64 to 81 shows a compositional bias: polar residues; the sequence is EVRTPSLRKNSNNVSSPL. A Phosphothreonine modification is found at Thr-121. Ser-145, Ser-156, and Ser-160 each carry phosphoserine. The residue at position 169 (Thr-169) is a Phosphothreonine. Ser-171 bears the Phosphoserine mark. Positions 171–182 are enriched in polar residues; that stretch reads SATLPSSESSPA. The segment at 171-220 is disordered; it reads SATLPSSESSPASPDLKLSRSHSHSAATRPTLNNINNTGMTTTTSNGEPN. Thr-173 carries the post-translational modification Phosphothreonine. Phosphoserine is present on residues Ser-183 and Ser-189. Positions 201–216 are enriched in low complexity; it reads TLNNINNTGMTTTTSN. Residue Tyr-227 is modified to Phosphotyrosine. 3 positions are modified to phosphoserine: Ser-228, Ser-257, and Ser-265. 2 disordered regions span residues 290–321 and 348–402; these read PATSPYVSPQQSARQYSNNANNNAKSPKNRSS and IESS…AIGK. The residue at position 295 (Tyr-295) is a Phosphotyrosine. Ser-297, Ser-320, and Ser-353 each carry phosphoserine. The span at 299–321 shows a compositional bias: low complexity; that stretch reads QQSARQYSNNANNNAKSPKNRSS. Low complexity predominate over residues 365–383; sequence PSFPLSSSLRSSANLASNP. Over residues 384 to 398 the composition is skewed to polar residues; that stretch reads ELATQTPLSTSSSYT. Residue Ser-439 is modified to Phosphoserine.

To yeast VHS2.

The protein localises to the cytoplasm. This chain is Protein MLF3 (MLF3), found in Saccharomyces cerevisiae (strain ATCC 204508 / S288c) (Baker's yeast).